Consider the following 408-residue polypeptide: UDP-N-acetylglucosamine--N-acetylmuramyl-(pentapeptide) pyrophosphoryl-undecaprenol N-acetylglucosamine transferase (408 aa).

The segment at 1–20 (MNDTVKKPTGGRGDDPLPAG) is disordered. UDP-N-acetyl-alpha-D-glucosamine contacts are provided by residues 41 to 43 (TAG), asparagine 160, arginine 197, serine 231, and glutamine 327.

This sequence belongs to the glycosyltransferase 28 family. MurG subfamily.

The protein resides in the cell membrane. The enzyme catalyses di-trans,octa-cis-undecaprenyl diphospho-N-acetyl-alpha-D-muramoyl-L-alanyl-D-glutamyl-meso-2,6-diaminopimeloyl-D-alanyl-D-alanine + UDP-N-acetyl-alpha-D-glucosamine = di-trans,octa-cis-undecaprenyl diphospho-[N-acetyl-alpha-D-glucosaminyl-(1-&gt;4)]-N-acetyl-alpha-D-muramoyl-L-alanyl-D-glutamyl-meso-2,6-diaminopimeloyl-D-alanyl-D-alanine + UDP + H(+). The protein operates within cell wall biogenesis; peptidoglycan biosynthesis. Cell wall formation. Catalyzes the transfer of a GlcNAc subunit on undecaprenyl-pyrophosphoryl-MurNAc-pentapeptide (lipid intermediate I) to form undecaprenyl-pyrophosphoryl-MurNAc-(pentapeptide)GlcNAc (lipid intermediate II). This Mycolicibacterium paratuberculosis (strain ATCC BAA-968 / K-10) (Mycobacterium paratuberculosis) protein is UDP-N-acetylglucosamine--N-acetylmuramyl-(pentapeptide) pyrophosphoryl-undecaprenol N-acetylglucosamine transferase.